The primary structure comprises 273 residues: Protein FAM216A (273 aa).

Residues M1–G47 are disordered.

Belongs to the FAM216 family.

In Homo sapiens (Human), this protein is Protein FAM216A (FAM216A).